The following is a 669-amino-acid chain: Probable L-type lectin-domain containing receptor kinase I.2 (669 aa).

Positions 1 to 24 are cleaved as a signal peptide; that stretch reads MAQRFYLLLLLLIFLVNLICFSSQ. Over 25 to 295 the chain is Extracellular; it reads QDLSFVFNGF…FTEQKRKRSP (271 aa). The legume-lectin like stretch occupies residues 26-266; it reads DLSFVFNGFN…NQYILGWSFS (241 aa). Residues Asn132, Asn189, Asn212, and Asn233 are each glycosylated (N-linked (GlcNAc...) asparagine). Residues 296–316 form a helical membrane-spanning segment; that stretch reads LLIVLLVILTLVVIGGLGGYY. Residues 317-669 are Cytoplasmic-facing; sequence LYRRKKYAEV…SHTILNGDGR (353 aa). Residues 351–609 enclose the Protein kinase domain; it reads FNKDGRLGKG…MQYINRDQAL (259 aa). ATP-binding positions include 357–365 and Lys379; that span reads LGKGGFGEV. The active-site Proton acceptor is the Asp475.

It in the C-terminal section; belongs to the protein kinase superfamily. Ser/Thr protein kinase family. The protein in the N-terminal section; belongs to the leguminous lectin family.

It localises to the cell membrane. The enzyme catalyses L-seryl-[protein] + ATP = O-phospho-L-seryl-[protein] + ADP + H(+). It catalyses the reaction L-threonyl-[protein] + ATP = O-phospho-L-threonyl-[protein] + ADP + H(+). Involved in resistance response to the pathogenic fungus Alternaria brassicicola. The protein is Probable L-type lectin-domain containing receptor kinase I.2 of Arabidopsis thaliana (Mouse-ear cress).